Reading from the N-terminus, the 894-residue chain is Leucine--tRNA ligase, mitochondrial (894 aa).

Residues 1–9 (MLPRPSSRF) constitute a mitochondrion transit peptide. The short motif at 56–66 (PYPSGVLHIGH) is the 'HIGH' region element. The short motif at 646–650 (KMSKS) is the 'KMSKS' region element. ATP is bound at residue Lys-649.

It belongs to the class-I aminoacyl-tRNA synthetase family.

It is found in the mitochondrion matrix. The enzyme catalyses tRNA(Leu) + L-leucine + ATP = L-leucyl-tRNA(Leu) + AMP + diphosphate. The protein is Leucine--tRNA ligase, mitochondrial (NAM2) of Saccharomyces paradoxus (Yeast).